Consider the following 487-residue polypeptide: 6-phosphogluconate dehydrogenase, decarboxylating 1, chloroplastic (487 aa).

Met-1 is subject to N-acetylmethionine. NADP(+) contacts are provided by residues 13-18, 36-38, 80-82, and Asn-108; these read GLAVMG, NRT, and VKA. Residues Asn-108 and 134–136 each bind substrate; that span reads SGG. Residue Lys-188 is the Proton acceptor of the active site. 191–192 serves as a coordination point for substrate; sequence HN. Glu-195 (proton donor) is an active-site residue. Substrate contacts are provided by Tyr-196, Lys-266, Arg-293, Arg-458, and His-464.

Belongs to the 6-phosphogluconate dehydrogenase family. Forms homodimer. Forms heterodimers with PGD2 or PGD3.

It localises to the plastid. The protein resides in the chloroplast. The protein localises to the cytoplasm. It is found in the cytosol. The catalysed reaction is 6-phospho-D-gluconate + NADP(+) = D-ribulose 5-phosphate + CO2 + NADPH. It functions in the pathway carbohydrate degradation; pentose phosphate pathway; D-ribulose 5-phosphate from D-glucose 6-phosphate (oxidative stage): step 3/3. Catalyzes the oxidative decarboxylation of 6-phosphogluconate to ribulose 5-phosphate and CO(2), with concomitant reduction of NADP to NADPH. The sequence is that of 6-phosphogluconate dehydrogenase, decarboxylating 1, chloroplastic from Arabidopsis thaliana (Mouse-ear cress).